A 139-amino-acid chain; its full sequence is Ribonuclease P protein component (139 aa).

Residues 120-139 (KATTGGECTPKSEKCVTAPR) are disordered.

Belongs to the RnpA family. Consists of a catalytic RNA component (M1 or rnpB) and a protein subunit.

It carries out the reaction Endonucleolytic cleavage of RNA, removing 5'-extranucleotides from tRNA precursor.. RNaseP catalyzes the removal of the 5'-leader sequence from pre-tRNA to produce the mature 5'-terminus. It can also cleave other RNA substrates such as 4.5S RNA. The protein component plays an auxiliary but essential role in vivo by binding to the 5'-leader sequence and broadening the substrate specificity of the ribozyme. The protein is Ribonuclease P protein component of Chlamydia pneumoniae (Chlamydophila pneumoniae).